A 527-amino-acid chain; its full sequence is Mitochondrial substrate carrier family protein V (527 aa).

Residues 1-14 (MNSSDFKKSFKEST) show a composition bias toward basic and acidic residues. Residues 1–29 (MNSSDFKKSFKESTENNSNTYRPSKTLNT) form a disordered region. At 1–132 (MNSSDFKKSF…VSKKSISKEN (132 aa)) the chain is on the mitochondrial intermembrane side. Residues 15-29 (ENNSNTYRPSKTLNT) are compositionally biased toward polar residues. Solcar repeat units lie at residues 130–220 (KENV…CKKH), 253–345 (MTVP…FKII), and 430–519 (VNMI…CKDL). A helical membrane pass occupies residues 133–153 (VNYLVSGSIAGAISRSATAGF). Residues 154–187 (ERLTIIQQVQGMSQNLSQGYVGCIAAMKEMVKRE) lie on the Mitochondrial matrix side of the membrane. A helical membrane pass occupies residues 188–208 (GFKSIWKGNGANIVKVSPNSG). At 209–258 (IRFLTYEFCKKHFLDNSSNHPSSSSIENGIDGNGVGCGSGSEMKMTVPQT) the chain is on the mitochondrial intermembrane side. Residues 259–279 (MFSGAMAGLTSTFFTYPLDVV) traverse the membrane as a helical segment. At 280-324 (RIRLSLQGSCSNDYAAHRYNGITHSFFKIHKDEGVKGLYKGLGTS) the chain is on the mitochondrial matrix side. A helical transmembrane segment spans residues 325–345 (IASIVPWVSISFATYEGFKII). Residues 346-435 (CKKMILNYQI…LKKGVNMICD (90 aa)) lie on the Mitochondrial intermembrane side of the membrane. Residues 436–456 (FVCGALSGAVTMTVCYPLDVL) form a helical membrane-spanning segment. At 457 to 487 (RRRMMIQGIGGNKVLYKNGWDATKKILSNEG) the chain is on the mitochondrial matrix side. The helical transmembrane segment at 488 to 508 (LVAFYHGIIPAYFKVVPTVAI) threads the bilayer. At 509–527 (SFAVYEICKDLGSNKYQQK) the chain is on the mitochondrial intermembrane side.

It belongs to the mitochondrial carrier (TC 2.A.29) family.

It is found in the mitochondrion inner membrane. Its function is as follows. Mitochondrial solute carriers shuttle metabolites, nucleotides, and cofactors through the mitochondrial inner membrane. The sequence is that of Mitochondrial substrate carrier family protein V (mcfV) from Dictyostelium discoideum (Social amoeba).